Consider the following 337-residue polypeptide: Cytoskeleton protein RodZ (337 aa).

Residues 1-111 (MNTEATHDQN…LGKRRKKRDG (111 aa)) lie on the Cytoplasmic side of the membrane. One can recognise an HTH cro/C1-type domain in the interval 19-71 (LRNAREQLGLSQQAVAERLCLKVSTVRDIEEDKAPADLASTFLRGYIRSYARL). Residues 30 to 49 (QQAVAERLCLKVSTVRDIEE) constitute a DNA-binding region (H-T-H motif). The chain crosses the membrane as a helical; Signal-anchor for type II membrane protein span at residues 112–132 (WLMTFTWLVLFVVIGLSGAWW). The Periplasmic segment spans residues 133-337 (WQDHKAQQEE…TLNAEQSPAQ (205 aa)). Polar residues predominate over residues 145-167 (TMADQSSAELSSNSEQGQSVPLN). The interval 145–237 (TMADQSSAEL…ATTTPDGAAP (93 aa)) is disordered. The segment covering 168–207 (TSTTTDPATTSTPPASVDTTATNTQTPAVTAPAPAVDPQQ) has biased composition (low complexity). Over residues 208 to 218 (NAVVSPSQANV) the composition is skewed to polar residues. The span at 219-237 (DTAATPAPTATTTPDGAAP) shows a compositional bias: low complexity.

The protein belongs to the RodZ family.

Its subcellular location is the cell inner membrane. Its function is as follows. Cytoskeletal protein that is involved in cell-shape control through regulation of the length of the long axis. The polypeptide is Cytoskeleton protein RodZ (Escherichia coli (strain 55989 / EAEC)).